The following is a 156-amino-acid chain: Small ribosomal subunit protein uS7 (156 aa).

Belongs to the universal ribosomal protein uS7 family. As to quaternary structure, part of the 30S ribosomal subunit. Contacts proteins S9 and S11.

Functionally, one of the primary rRNA binding proteins, it binds directly to 16S rRNA where it nucleates assembly of the head domain of the 30S subunit. Is located at the subunit interface close to the decoding center, probably blocks exit of the E-site tRNA. The sequence is that of Small ribosomal subunit protein uS7 from Dictyoglomus turgidum (strain DSM 6724 / Z-1310).